A 387-amino-acid chain; its full sequence is EP300-interacting inhibitor of differentiation 3 (387 aa).

Positions 1–19 are enriched in basic and acidic residues; sequence MSEEKCSLTGGEEKGEELA. Residues 1–77 are disordered; it reads MSEEKCSLTG…SDDLSPEAPC (77 aa). The segment covering 32–72 has biased composition (acidic residues); sequence EEDDDDDEEALKKEEEEEEEEEEEDEEEEEEGPDSSSDDLS.

It belongs to the NSE4 family. As to quaternary structure, component of the SMC5-SMC6 complex which consists at least of SMC5, SMC6, NSMCE2, NSMCE1, NSMCE4A or EID3 and NSMCE3. NSMCE1, NSMCE4A or EID3 and NSMCE3 probably form a subcomplex that bridges the head domains of the SMC5:SMC6 heterodimer. Homodimer, and heterodimer with EID2. Interacts with the C-terminal region of CREBBP.

The protein resides in the nucleus. It is found in the cytoplasm. The protein localises to the chromosome. It localises to the telomere. Its function is as follows. Tissue-specific component of the SMC5-SMC6 complex, a complex involved in repair of DNA double-strand breaks by homologous recombination. The complex may promote sister chromatid homologous recombination by recruiting the SMC1-SMC3 cohesin complex to double-strand breaks. The complex is required for telomere maintenance via recombination and mediates sumoylation of shelterin complex (telosome) components. In terms of biological role, acts as a repressor of nuclear receptor-dependent transcription possibly by interfering with CREBBP-dependent coactivation. May function as a coinhibitor of other CREBBP/EP300-dependent transcription factors. The polypeptide is EP300-interacting inhibitor of differentiation 3 (Rattus norvegicus (Rat)).